The chain runs to 747 residues: Plakophilin-1 (747 aa).

The segment at 1–234 (MNHSPLKTAL…SFGHSRASSK (234 aa)) is required for binding to single stranded DNA. The segment at 1–286 (MNHSPLKTAL…ESAKQQVYQL (286 aa)) is required for interaction with EIF4A1. Residue Ser-4 is modified to Phosphoserine. Positions 48-68 (TVKRQKSKSSQSSTLSHSNRG) are disordered. Phosphorylation in this region is required for cytoplasmic localization and protein stabilization regions lie at residues 54–69 (SKSSQSSTLSHSNRGS) and 116–191 (RFSS…STCS). Ser-118 is subject to Phosphoserine; by PKB/AKT2. 3 positions are modified to phosphoserine: Ser-119, Ser-121, and Ser-142. The interval 160-269 (YCDPRGTLRK…KYQAIGAYYI (110 aa)) is required for WNT-mediated nuclear localization. 9 ARM repeats span residues 243–274 (SGLTIPKAVQYLSSQDEKYQAIGAYYIQHTCF), 275–316 (QDES…NLVF), 317–359 (RSTT…NLSS), 360–415 (TDEL…KRLG), 416–463 (MREL…NCVA), 525–556 (NYDCPLPEEETNPKGSGWLYHSDAIRTYLNLM), 557–603 (GKSK…IARL), 604–649 (LQSG…SHTG), and 650–713 (NTSN…DMWS).

The protein belongs to the beta-catenin family. Part of a complex that contains DSG3, PKP1, YAP1 and YWHAG; the complex is required for localization of DSG3 and YAP1 to the cell membrane in keratinocytes. Interacts with DSP. Interacts (via N-terminus) with KRT5/CK5, KRT8/CK8 (via rod domain), KRT15/CK15 and KRT18/CK18 (via rod domain) as part of intermediate filaments. Interacts with VIM (via rod domain). Interacts with DSP. Interacts with DES. Interacts with FXR1; the interaction may facilitate the binding of PKP1 to PKP2, PKP3 and DSP mRNA. Interacts (via N-terminus) with EIF4A1; the interaction promotes EIF4A1 recruitment to the cap-dependent translation complex and EIF4A1 ATPase activity. Interacts with TJP1/ZO-1; the interaction facilitates TJP1/ZO-1 localization to the plasma membrane. Interacts (when phosphorylated) with YWHAG; the interaction results in translocation of PKP1 to the cytoplasm and loss of intercellular adhesion in keratinocytes. Post-translationally, phosphorylated by AKT2; required for interaction with YWHAG and subsequent localization away from desmosomes to the cytoplasm. Phosphorylation of Ser-118 by AKT2 promotes PKP1-driven cap-dependent mRNA translation and decreases intercellular adhesion, phosphorylation is promoted by insulin. Phosphorylation by RIPK4 at the N-terminus is required for its role in differentiation of keratinocytes and DSG1 localization at cell junctions. In terms of tissue distribution, expressed in stratified squamous, complex, glandular duct and bladder epithelia (at protein level). As to expression, widely expressed (at protein level).

The protein resides in the cell junction. The protein localises to the desmosome. It localises to the nucleus. Its subcellular location is the cytoplasm. It is found in the perinuclear region. The protein resides in the cell membrane. The protein localises to the stress granule. Functionally, a component of desmosome cell-cell junctions which are required for positive regulation of cellular adhesion. Plays a role in desmosome protein expression regulation and localization to the desmosomal plaque, thereby maintaining cell sheet integrity and anchorage of desmosomes to intermediate filaments. Required for localization of DSG3 and YAP1 to the cell membrane in keratinocytes in response to mechanical strain, via the formation of an interaction complex composed of DSG3, YAP1, PKP1 and YWHAG. Positively regulates differentiation of keratinocytes, potentially via promoting localization of DSG1 at desmosome cell junctions. Required for calcium-independent development and maturation of desmosome plaques specifically at lateral cell-cell contacts in differentiating keratinocytes. Plays a role in the maintenance of DSG3 protein abundance, DSG3 clustering and localization of these clusters to the cell membrane in keratinocytes. May also promote keratinocyte proliferation and morphogenesis during postnatal development. Required for tight junction inside-out transepidermal barrier function of the skin. Promotes Wnt-mediated proliferation and differentiation of ameloblasts, via facilitating TJP1/ZO-1 localization to tight junctions. Binds single-stranded DNA (ssDNA), and may thereby play a role in sensing DNA damage and promoting cell survival. Positively regulates cap-dependent translation and as a result cell proliferation, via recruitment of EIF4A1 to the initiation complex and promotion of EIF4A1 ATPase activity. Regulates the mRNA stability and protein abundance of desmosome components PKP2, PKP3, DSC2 and DSP, potentially via its interaction with FXR1. The polypeptide is Plakophilin-1 (PKP1) (Homo sapiens (Human)).